A 1504-amino-acid chain; its full sequence is Nischarin (1504 aa).

At A2 the chain carries N-acetylalanine. The tract at residues 2–133 (ATARTFGPER…GITAALAEEL (132 aa)) is necessary for binding to phosphoinositide-3-P; not sufficient for targeting to endosomes. The PX domain occupies 11–121 (REAEPAKEAR…AHFLHFHFYE (111 aa)). Residues 120–695 (YEINGITAAL…ERLALEWALG (576 aa)) are necessary for homooligomerization and targeting to endosomes. An interaction with PAK1 region spans residues 245-869 (LSVRFSATSM…LVYSDKRMVQ (625 aa)). LRR repeat units follow at residues 288–309 (ALTTLDLSHNSVSEIDESVKLI), 311–332 (KIEFLDLSHNGLLVVDNLQHLY), 333–354 (NLVHLDLSYNKLSSLEGLHTKL), 356–377 (NIKTLNLAGNLLESLSGLHKLY), 378–399 (SLVNLDLRDNRIEQMEEVRSIG), and 403–424 (CLEHVSLLNNPLSIIPDYRTKV). Residues 463-478 (KSKLSNPEKKGGEDSR) show a composition bias toward basic and acidic residues. Disordered stretches follow at residues 463–501 (KSKLSNPEKKGGEDSRLSAAPCIRPSSSPPTVAPASASL), 524–547 (SSTDSLTPEHQPIAQGCSDSLESI), 554–573 (SDDLRDVPGAVGGASPEHAE), and 628–687 (REEG…EEER). Phosphoserine is present on residues S541, S543, and S546. Positions 634–695 (EQGEEEDEEE…ERLALEWALG (62 aa)) form a coiled coil. Composition is skewed to acidic residues over residues 635-649 (QGEEEDEEEEEEEDV) and 661-685 (DVEEEEGGGQGEEEEEEEEDEEAEE). Positions 660–869 (PDVEEEEGGG…LVYSDKRMVQ (210 aa)) are interaction with LIMK. Positions 709–807 (KVLWCFLIHV…ANLHEFHADL (99 aa)) are interaction with ITGA5. A disordered region spans residues 1016–1104 (TPGTGGSPQG…PAPPPAEAPA (89 aa)). Position 1022 is a phosphoserine (S1022). Residues 1032-1043 (PAERRASNDQRP) show a composition bias toward basic and acidic residues. The segment covering 1063 to 1078 (PAAASASGPAKTPAPA) has biased composition (low complexity). Residue T1282 is modified to Phosphothreonine. S1284 is subject to Phosphoserine.

Homooligomer. Interacts with GRB2. Interacts with PIK3R1; probably associates with the PI3-kinase complex. Interacts with IRS4. Found in a complex with ITGA5 and PAK1. Found in a complex with LIMK1 and PAK1. Interacts with ITGA5 (via cytoplasmic domain); this interaction is direct. Interacts with PAK1 (via kinase domain); this interaction is direct and is increased upon activation of PAK1. Interacts with LIMK1 (via PDZ and kinase domain); this interaction is direct. Interacts with LIMK2; this interaction depends on LIMK2 activity. Interacts with RAC1 (activated state). Interacts with STK11; this interaction may increase STK11 activity. In terms of tissue distribution, isoform 1, isoform 3 and isoform 4 are expressed in brain. Isoform 1 is expressed in endocrine tissues.

The protein localises to the cell membrane. The protein resides in the cytoplasm. It localises to the early endosome. It is found in the recycling endosome. Functionally, acts either as the functional imidazoline-1 receptor (I1R) candidate or as a membrane-associated mediator of the I1R signaling. Binds numerous imidazoline ligands that induces initiation of cell-signaling cascades triggering to cell survival, growth and migration. Its activation by the agonist rilmenidine induces an increase in phosphorylation of mitogen-activated protein kinases MAPK1 and MAPK3 in rostral ventrolateral medulla (RVLM) neurons that exhibited rilmenidine-evoked hypotension. Blocking its activation with efaroxan abolished rilmenidine-induced mitogen-activated protein kinase phosphorylation in RVLM neurons. Acts as a modulator of Rac-regulated signal transduction pathways. Suppresses Rac1-stimulated cell migration by interacting with PAK1 and inhibiting its kinase activity. Also blocks Pak-independent Rac signaling by interacting with RAC1 and inhibiting Rac1-stimulated NF-kB response element and cyclin D1 promoter activation. Also inhibits LIMK1 kinase activity by reducing LIMK1 'Tyr-508' phosphorylation. Inhibits Rac-induced cell migration and invasion in breast and colon epithelial cells. Inhibits lamellipodia formation, when overexpressed. Plays a role in protection against apoptosis. Involved in association with IRS4 in the enhancement of insulin activation of MAPK1 and MAPK3. When overexpressed, induces a redistribution of cell surface ITGA5 integrin to intracellular endosomal structures. This is Nischarin (NISCH) from Homo sapiens (Human).